A 225-amino-acid polypeptide reads, in one-letter code: MTQVKTQPPEEVALQLIVGLGNPGPQYANTRHNCGFMVVDQLAERWGIPLALEKRFQGSYGEGFALGGKRRLLKPETYMNRSGEAVRAVLDWYKLDPASVLVVYDDMDLPLGRLRLRGSGSAGGHNGMKSVIEHLGSEAFPRLRLGVGRPKGNQDRVGHVLGSFEPAEQAVLDRVLRAAVAAVECCLQEGLKTAMNRFNPLDFSGPDRQDQPAPLNPAKTAPGES.

Tyr27 contributes to the tRNA binding site. His32 (proton acceptor) is an active-site residue. TRNA contacts are provided by Tyr78, Asn80, and Asn126. The segment at 198–225 (FNPLDFSGPDRQDQPAPLNPAKTAPGES) is disordered.

Belongs to the PTH family. As to quaternary structure, monomer.

The protein localises to the cytoplasm. The enzyme catalyses an N-acyl-L-alpha-aminoacyl-tRNA + H2O = an N-acyl-L-amino acid + a tRNA + H(+). In terms of biological role, hydrolyzes ribosome-free peptidyl-tRNAs (with 1 or more amino acids incorporated), which drop off the ribosome during protein synthesis, or as a result of ribosome stalling. Its function is as follows. Catalyzes the release of premature peptidyl moieties from peptidyl-tRNA molecules trapped in stalled 50S ribosomal subunits, and thus maintains levels of free tRNAs and 50S ribosomes. In Synechococcus sp. (strain JA-3-3Ab) (Cyanobacteria bacterium Yellowstone A-Prime), this protein is Peptidyl-tRNA hydrolase.